The chain runs to 303 residues: 1-acyl-sn-glycerol-3-phosphate acyltransferase (303 aa).

The short motif at 82 to 87 (HQSTLD) is the HXXXXD motif element. Positions 278 to 303 (NEPVPSVSISNDVNTHNEGSSVKKMH) are disordered. Polar residues predominate over residues 284–297 (VSISNDVNTHNEGS).

It belongs to the 1-acyl-sn-glycerol-3-phosphate acyltransferase family.

The protein localises to the lipid droplet. The catalysed reaction is a 1-acyl-sn-glycero-3-phosphate + an acyl-CoA = a 1,2-diacyl-sn-glycero-3-phosphate + CoA. It carries out the reaction a 1-acyl-sn-glycero-3-phosphocholine + an acyl-CoA = a 1,2-diacyl-sn-glycero-3-phosphocholine + CoA. The enzyme catalyses a 1-acyl-sn-glycero-3-phosphoethanolamine + an acyl-CoA = a 1,2-diacyl-sn-glycero-3-phosphoethanolamine + CoA. It catalyses the reaction 1-hexadecanoyl-sn-glycero-3-phosphate + (9Z)-octadecenoyl-CoA = 1-hexadecanoyl-2-(9Z-octadecenoyl)-sn-glycero-3-phosphate + CoA. The catalysed reaction is 1-octadecanoyl-sn-glycero-3-phosphate + (9Z)-octadecenoyl-CoA = 1-octadecanoyl-2-(9Z-octadecenoyl)-sn-glycero-3-phosphate + CoA. It carries out the reaction 1-(9Z-octadecenoyl)-sn-glycero-3-phospho-L-serine + (9Z)-octadecenoyl-CoA = 1,2-di-(9Z)-octadecenoyl-sn-glycero-3-phospho-L-serine + CoA. The enzyme catalyses a 1-acyl-sn-glycero-3-phospho-(1D-myo-inositol) + (9Z)-octadecenoyl-CoA = a 1-acyl-2-(9Z-octadecenoyl)-sn-glycero-3-phospho-(1D-myo-inositol) + CoA. It catalyses the reaction 1-heptadecanoyl-sn-glycero-3-phosphate + (9Z)-octadecenoyl-CoA = 1-heptadecanoyl-2-(9Z)-octadecenoyl-sn-glycero-3-phosphate + CoA. The catalysed reaction is 1-heptadecanoyl-sn-glycero-3-phosphate + dodecanoyl-CoA = 1-heptadecanoyl-2-dodecanoyl-sn-glycero-3-phosphate + CoA. It carries out the reaction 1-heptadecanoyl-sn-glycero-3-phosphate + tetradecanoyl-CoA = 1-heptadecanoyl-2-tetradecanoyl-sn-glycero-3-phosphate + CoA. It functions in the pathway phospholipid metabolism; CDP-diacylglycerol biosynthesis; CDP-diacylglycerol from sn-glycerol 3-phosphate: step 2/3. Its function is as follows. Acyltransferase that catalyzes the sn-2-specific, acyl-CoA-dependent acylation of lysophosphatidic acid (LPA) to phosphatidic acid (PA) in lipid particles. Together with ALE1, plays a central role in PA biosynthesis. PA is the intermediate, from which all glycerophospholipids are synthesized. Can also acylate lysophosphoinositol (LPI) and lysophosphoserine (LPS). The fatty acyl substrates include 18:1-acyl-CoA, 14:0-acyl-CoA, 12:0-acyl-CoA and 10:0-acyl-CoA. The sequence is that of 1-acyl-sn-glycerol-3-phosphate acyltransferase from Saccharomyces cerevisiae (strain ATCC 204508 / S288c) (Baker's yeast).